Reading from the N-terminus, the 722-residue chain is Polyribonucleotide nucleotidyltransferase (722 aa).

Residues aspartate 487 and aspartate 493 each coordinate Mg(2+). The KH domain maps to 554 to 613 (PRIETFKIPTDKIREVIGTGGKVIREIVEKTGAKVNIEDDGTVKVASSDGESIKAAIKWI). The S1 motif domain occupies 623-691 (GEIYEGTVVK…DRGKTRLSMK (69 aa)). Positions 697 to 722 (TGEDLEAKQKAEAKAEGEAPAQAAGE) are disordered. The segment covering 701 to 713 (LEAKQKAEAKAEG) has biased composition (basic and acidic residues).

Belongs to the polyribonucleotide nucleotidyltransferase family. Mg(2+) is required as a cofactor.

It localises to the cytoplasm. It carries out the reaction RNA(n+1) + phosphate = RNA(n) + a ribonucleoside 5'-diphosphate. Its function is as follows. Involved in mRNA degradation. Catalyzes the phosphorolysis of single-stranded polyribonucleotides processively in the 3'- to 5'-direction. The polypeptide is Polyribonucleotide nucleotidyltransferase (Rhodopseudomonas palustris (strain TIE-1)).